Consider the following 120-residue polypeptide: Large ribosomal subunit protein uL18 (120 aa).

It belongs to the universal ribosomal protein uL18 family. In terms of assembly, part of the 50S ribosomal subunit; part of the 5S rRNA/L5/L18/L25 subcomplex. Contacts the 5S and 23S rRNAs.

Functionally, this is one of the proteins that bind and probably mediate the attachment of the 5S RNA into the large ribosomal subunit, where it forms part of the central protuberance. This chain is Large ribosomal subunit protein uL18, found in Treponema denticola (strain ATCC 35405 / DSM 14222 / CIP 103919 / JCM 8153 / KCTC 15104).